The primary structure comprises 97 residues: Co-chaperonin GroES (97 aa).

Belongs to the GroES chaperonin family. Heptamer of 7 subunits arranged in a ring. Interacts with the chaperonin GroEL.

It localises to the cytoplasm. In terms of biological role, together with the chaperonin GroEL, plays an essential role in assisting protein folding. The GroEL-GroES system forms a nano-cage that allows encapsulation of the non-native substrate proteins and provides a physical environment optimized to promote and accelerate protein folding. GroES binds to the apical surface of the GroEL ring, thereby capping the opening of the GroEL channel. The polypeptide is Co-chaperonin GroES (Pseudomonas putida (Arthrobacter siderocapsulatus)).